Consider the following 641-residue polypeptide: Probable potassium transport system protein Kup 4 (641 aa).

12 helical membrane-spanning segments follow: residues 31–51, 64–84, 119–139, 155–175, 183–203, 221–241, 265–285, 298–318, 355–375, 381–401, 412–432, and 437–457; these read AALGALGIVYGDLGTSPLYTL, TASALGILSLLVWTLIITISI, ILAVMGLLGAALLYGDGVITP, GSLKPFVMPAAVAILIVFFAA, IGAAFGPIMLLWFLVIAVLGL, AIGFLAHSGGNGMLVLGGVFL, WYAIVLPSLLLSYAGQTALLI, LCPTWGVYPLVFLAMIATIIA, IYVPVVNWMMMVATIGITIAF, LAGAYGTAVSTTMLLTTCLLF, LAVSILIAGLFLIVDVGFFGA, and IAEGGWLPLTFGALVFFLMLT.

The protein belongs to the HAK/KUP transporter (TC 2.A.72) family.

It is found in the cell inner membrane. The enzyme catalyses K(+)(in) + H(+)(in) = K(+)(out) + H(+)(out). Functionally, transport of potassium into the cell. Likely operates as a K(+):H(+) symporter. This Bradyrhizobium sp. (strain BTAi1 / ATCC BAA-1182) protein is Probable potassium transport system protein Kup 4.